The chain runs to 475 residues: Methylenomycin A resistance protein (475 aa).

Transmembrane regions (helical) follow at residues 28–48, 65–85, 93–113, 123–143, 152–172, 173–193, 212–232, 240–260, 285–305, 314–334, 346–366, 371–391, 416–436, and 439–459; these read ITALATGFVMATLDVTVVNVA, WIVDGYVLTFASLLMLAGGLA, VYLWGMGVFFLASLACALAPT, VQGAGAALFMPSSLSLLVFSF, MLGLWSAIVATSSGLGPTVGG, LMVSAFGWESIFLLNLPIGAI, LAVPGHLLWIVALAAVSFALI, TAGPVLTAYAVAVTAAALLAL, LVGFLFNFALFGSTFMLGLYF, FQAGLELLPMTIFFPVANIVY, LLTAFLLLAGAASLSMVTITA, WVVAVAVGVANIGAGIISPGM, QIGSLVGIAAMGVVLHSTSDW, and GAAISFLAVGLAYLLGGLSAW.

Belongs to the major facilitator superfamily.

The protein localises to the cell membrane. Resistance to the epoxide antibiotic methylenomycin A; probably by mediating its efflux. The sequence is that of Methylenomycin A resistance protein (mmr) from Streptomyces coelicolor (strain ATCC BAA-471 / A3(2) / M145).